The chain runs to 124 residues: uncharacterized protein (124 aa).

The signal sequence occupies residues 1–19 (MRLLVQKVILIYLARYAKS). The next 2 membrane-spanning stretches (helical) occupy residues 37–57 (IAEF…GVKF) and 86–108 (LGAL…IIII).

The protein localises to the membrane. This is an uncharacterized protein from Saccharomyces cerevisiae (strain ATCC 204508 / S288c) (Baker's yeast).